Here is a 429-residue protein sequence, read N- to C-terminus: G2/mitotic-specific cyclin-B1 (429 aa).

Polar residues predominate over residues 1 to 14 (MALRVTRNTKLNTE). Disordered regions lie at residues 1–21 (MALR…KVSM) and 71–128 (TGKV…PMET). Position 73 is an N6-acetyllysine (lysine 73). Over residues 92-106 (PEVELAEPEPEPEPV) the composition is skewed to acidic residues. Serine 122 carries the post-translational modification Phosphoserine; by CDK1. Serine 124 is subject to Phosphoserine. Serine 129 is modified (phosphoserine; by PLK1). Serine 143 is subject to Phosphoserine. Interaction with CDK2 stretches follow at residues 165 to 173 (EYVKDIYAY) and 254 to 257 (YEEM). Threonine 317 carries the post-translational modification Phosphothreonine.

Belongs to the cyclin family. Cyclin AB subfamily. In terms of assembly, interacts with the CDC2 protein kinase to form a serine/threonine kinase holoenzyme complex also known as maturation promoting factor (MPF). The cyclin subunit imparts substrate specificity to the complex. Binds HEI10. Interacts with catalytically active RALBP1 and CDC2 during mitosis to form an endocytotic complex during interphase. Interacts with CCNF; interaction is required for nuclear localization. Interacts with CDK5RAP3. Interacts with RFPL4A and UBE2A. Interacts with INCA1. Post-translationally, ubiquitinated by the SCF(NIPA) complex during interphase, leading to its destruction. Not ubiquitinated during G2/M phases. In terms of processing, phosphorylated by PLK1 at Ser-129 on centrosomes during prophase: phosphorylation by PLK1 does not cause nuclear import. Phosphorylation at Ser-143 was also reported to be mediated by PLK1 but Ser-129 seems to be the primary phosphorylation site.

It localises to the cytoplasm. The protein resides in the nucleus. It is found in the cytoskeleton. The protein localises to the microtubule organizing center. Its subcellular location is the centrosome. Functionally, essential for the control of the cell cycle at the G2/M (mitosis) transition. In Cricetulus griseus (Chinese hamster), this protein is G2/mitotic-specific cyclin-B1 (CCNB1).